The following is a 352-amino-acid chain: Small ribosomal subunit biogenesis GTPase RsgA 1 (352 aa).

The disordered stretch occupies residues 1-24 (MAKKKKLTQGQVRRVRDNQQKRLK). Residues 104-272 (TSVLTRPDYY…LIDSPGVREF (169 aa)) form the CP-type G domain. GTP contacts are provided by residues 160 to 163 (NKID) and 214 to 222 (GQSGVGKSS). Residues Cys-296, Cys-301, His-303, and Cys-309 each coordinate Zn(2+).

The protein belongs to the TRAFAC class YlqF/YawG GTPase family. RsgA subfamily. In terms of assembly, monomer. Associates with 30S ribosomal subunit, binds 16S rRNA. Zn(2+) serves as cofactor.

The protein resides in the cytoplasm. Functionally, one of several proteins that assist in the late maturation steps of the functional core of the 30S ribosomal subunit. Helps release RbfA from mature subunits. May play a role in the assembly of ribosomal proteins into the subunit. Circularly permuted GTPase that catalyzes slow GTP hydrolysis, GTPase activity is stimulated by the 30S ribosomal subunit. The polypeptide is Small ribosomal subunit biogenesis GTPase RsgA 1 (Vibrio vulnificus (strain CMCP6)).